A 475-amino-acid chain; its full sequence is Bifunctional protein HldE (475 aa).

Positions 1 to 317 (MQYSAQFNRA…ENAIHGRTTA (317 aa)) are ribokinase. An ATP-binding site is contributed by 194–197 (NMSE). The active site involves aspartate 263. Residues 343–475 (MTNGCFDILH…VIKKIQQLKE (133 aa)) are cytidylyltransferase.

In the N-terminal section; belongs to the carbohydrate kinase PfkB family. This sequence in the C-terminal section; belongs to the cytidylyltransferase family. Homodimer.

It carries out the reaction D-glycero-beta-D-manno-heptose 7-phosphate + ATP = D-glycero-beta-D-manno-heptose 1,7-bisphosphate + ADP + H(+). The enzyme catalyses D-glycero-beta-D-manno-heptose 1-phosphate + ATP + H(+) = ADP-D-glycero-beta-D-manno-heptose + diphosphate. Its pathway is nucleotide-sugar biosynthesis; ADP-L-glycero-beta-D-manno-heptose biosynthesis; ADP-L-glycero-beta-D-manno-heptose from D-glycero-beta-D-manno-heptose 7-phosphate: step 1/4. It participates in nucleotide-sugar biosynthesis; ADP-L-glycero-beta-D-manno-heptose biosynthesis; ADP-L-glycero-beta-D-manno-heptose from D-glycero-beta-D-manno-heptose 7-phosphate: step 3/4. In terms of biological role, catalyzes the phosphorylation of D-glycero-D-manno-heptose 7-phosphate at the C-1 position to selectively form D-glycero-beta-D-manno-heptose-1,7-bisphosphate. Its function is as follows. Catalyzes the ADP transfer from ATP to D-glycero-beta-D-manno-heptose 1-phosphate, yielding ADP-D-glycero-beta-D-manno-heptose. In Histophilus somni (strain 129Pt) (Haemophilus somnus), this protein is Bifunctional protein HldE.